The following is a 411-amino-acid chain: Signal-transducing adaptor protein 2 (411 aa).

The 101-residue stretch at 20-120 (HYYESFLEKK…GFILTVVELR (101 aa)) folds into the PH domain. Tyr-22 bears the Phosphotyrosine mark. Residues 152–248 (WCFLQVSRLE…RALVPFLLDE (97 aa)) enclose the SH2 domain. Tyr-250 bears the Phosphotyrosine; by PTK6 mark. Residues 291 to 320 (VPVSVSSQEDKLPQLPPLPQLPDTDENYVT) are disordered. Tyr-318 and Tyr-330 each carry phosphotyrosine. A disordered region spans residues 338–364 (SSQAVPLKPKKPARLPAKPPKPSVVPK). Positions 390 to 410 (TRLGDITAELEEKLQKRRALE) form a coiled coil.

Interacts with PTK6 and CSF1R. Post-translationally, phosphorylated on tyrosine. Phosphorylated by PTK6 at Tyr-250 modulates PTK6-mediated STAT3 activation. In terms of tissue distribution, widely expressed.

It localises to the cytoplasm. The protein localises to the membrane. In terms of biological role, substrate of protein kinase PTK6. May play a regulatory role in the acute-phase response in systemic inflammation and may modulate STAT3 activity. This is Signal-transducing adaptor protein 2 (Stap2) from Mus musculus (Mouse).